Here is a 255-residue protein sequence, read N- to C-terminus: Ribonuclease HII (255 aa).

One can recognise an RNase H type-2 domain in the interval 72 to 255; the sequence is AIICGIDEVG…KSFEPIKSLL (184 aa). A divalent metal cation is bound by residues Asp78, Glu79, and Asp170.

It belongs to the RNase HII family. Mn(2+) serves as cofactor. The cofactor is Mg(2+).

Its subcellular location is the cytoplasm. The enzyme catalyses Endonucleolytic cleavage to 5'-phosphomonoester.. Functionally, endonuclease that specifically degrades the RNA of RNA-DNA hybrids. In Staphylococcus aureus (strain MRSA252), this protein is Ribonuclease HII.